The sequence spans 213 residues: ATP synthase peripheral stalk subunit OSCP, mitochondrial (213 aa).

The N-terminal 23 residues, 1 to 23 (MAAPAVSGLSRQVRYFSTSVVRP), are a transit peptide targeting the mitochondrion. The SIFI-degron signature appears at 5–23 (AVSGLSRQVRYFSTSVVRP). An N6-acetyllysine mark is found at K54, K60, K70, and K73. Residue K90 is modified to N6-succinyllysine. K158 and K162 each carry N6-acetyllysine; alternate. N6-succinyllysine; alternate occurs at positions 158 and 162. 3 positions are modified to N6-acetyllysine: K172, K176, and K192. At K199 the chain carries N6-succinyllysine.

This sequence belongs to the ATPase delta chain family. In terms of assembly, component of the ATP synthase complex composed at least of ATP5F1A/subunit alpha, ATP5F1B/subunit beta, ATP5MC1/subunit c (homooctomer), MT-ATP6/subunit a, MT-ATP8/subunit 8, ATP5ME/subunit e, ATP5MF/subunit f, ATP5MG/subunit g, ATP5MK/subunit k, ATP5MJ/subunit j, ATP5F1C/subunit gamma, ATP5F1D/subunit delta, ATP5F1E/subunit epsilon, ATP5PF/subunit F6, ATP5PB/subunit b, ATP5PD/subunit d, ATP5PO/subunit OSCP. ATP synthase complex consists of a soluble F(1) head domain (subunits alpha(3) and beta(3)) - the catalytic core - and a membrane F(0) domain - the membrane proton channel (subunits c, a, 8, e, f, g, k and j). These two domains are linked by a central stalk (subunits gamma, delta, and epsilon) rotating inside the F1 region and a stationary peripheral stalk (subunits F6, b, d, and OSCP). Post-translationally, acetylation at Lys-162 decreases ATP production. Deacetylated by SIRT3. In terms of processing, in response to mitochondrial stress, the precursor protein is ubiquitinated by the SIFI complex in the cytoplasm before mitochondrial import, leading to its degradation. Within the SIFI complex, UBR4 initiates ubiquitin chain that are further elongated or branched by KCMF1.

It localises to the mitochondrion. Its subcellular location is the mitochondrion inner membrane. In terms of biological role, subunit OSCP, of the mitochondrial membrane ATP synthase complex (F(1)F(0) ATP synthase or Complex V) that produces ATP from ADP in the presence of a proton gradient across the membrane which is generated by electron transport complexes of the respiratory chain. ATP synthase complex consist of a soluble F(1) head domain - the catalytic core - and a membrane F(1) domain - the membrane proton channel. These two domains are linked by a central stalk rotating inside the F(1) region and a stationary peripheral stalk. During catalysis, ATP synthesis in the catalytic domain of F(1) is coupled via a rotary mechanism of the central stalk subunits to proton translocation. In vivo, can only synthesize ATP although its ATP hydrolase activity can be activated artificially in vitro. Part of the complex F(0) domain. Part of the complex F(0) domain and the peripheric stalk, which acts as a stator to hold the catalytic alpha(3)beta(3) subcomplex and subunit a/ATP6 static relative to the rotary elements. This is ATP synthase peripheral stalk subunit OSCP, mitochondrial from Plecturocebus moloch (Dusky titi monkey).